The chain runs to 246 residues: Homeobox protein SIX6 (246 aa).

Residues 126–186 (WDGEQKTHCF…KNRRQRDRAA (61 aa)) constitute a DNA-binding region (homeobox). A disordered region spans residues 190–246 (NRLQQQVLSQGPGRVLRSEGEGTPEVLGVASSPAASLSSKAATSAISITSSDSECDI). Phosphothreonine is present on threonine 212. The segment covering 219-246 (ASSPAASLSSKAATSAISITSSDSECDI) has biased composition (low complexity). Phosphoserine occurs at positions 221, 225, 227, and 228.

This sequence belongs to the SIX/Sine oculis homeobox family. Interacts with TLE4 and TLE5. In the developing embryo, expressed mainly in the ventral optic stalk, optic chiasma, the neural retina and the primordial tissues that give rise to the pituitary/hypothalamus axis. Not expressed in the lens placode.

It localises to the nucleus. In terms of biological role, may be involved in eye development. The chain is Homeobox protein SIX6 (Six6) from Mus musculus (Mouse).